Reading from the N-terminus, the 896-residue chain is Alanine--tRNA ligase (896 aa).

Histidine 574, histidine 578, cysteine 677, and histidine 681 together coordinate Zn(2+).

This sequence belongs to the class-II aminoacyl-tRNA synthetase family. Zn(2+) serves as cofactor.

The protein localises to the cytoplasm. The enzyme catalyses tRNA(Ala) + L-alanine + ATP = L-alanyl-tRNA(Ala) + AMP + diphosphate. In terms of biological role, catalyzes the attachment of alanine to tRNA(Ala) in a two-step reaction: alanine is first activated by ATP to form Ala-AMP and then transferred to the acceptor end of tRNA(Ala). Also edits incorrectly charged Ser-tRNA(Ala) and Gly-tRNA(Ala) via its editing domain. The protein is Alanine--tRNA ligase of Mycoplasma mycoides subsp. mycoides SC (strain CCUG 32753 / NCTC 10114 / PG1).